The following is a 517-amino-acid chain: MAPSTIGTNVAGDKYEYDPENWMAKGTSTLNNGNGTKGTLDVDLPERHPETGINVLVVGAGMGGLMTTLECWRKGHNIVGILERNDGPVYSGDIIVIQPSAVSVLRHWPDMMRDMEDEQVNAAVSYEQHTGRHIYGPTVPSFNELEHLASRKGPFVAPAQIREKFYRMLLRQVAKLGFKVQYGKRAVSYFEDIAAGKGGVVLESGEIQVADVVVAADGLRSTSEILIAGEHTPTKSSGMSIYRTAYPREMAMKDETVRKRWADTKEIWEYWLGPGMYIGVFFSEDVVSWGFTPRDTHGGATESWEPDTDPEDVVKELLRVPDWDPAIAALVRTAPKGAIVHWPLLWRNLRREWTSSGGHVVQLGDSAHSFVPTSGNGATQALEDAITLATCLQLGGAARNAPLATKIYNLLRYERVSCAQKMSFVNSQLKTETDWDGIWADPIKVRTRFPKWIHNHDPEDYAYAKYGQAFAHLVAGADFANENFPPGHHFVPWSIEEVYADIEAGKKVEALLDGDWS.

Positions 96 and 162 each coordinate FAD. Active-site residues include Arg243 and Tyr270. Positions 365 and 378 each coordinate FAD.

The protein belongs to the paxM FAD-dependent monooxygenase family. Requires FAD as cofactor.

It functions in the pathway secondary metabolite biosynthesis. In terms of biological role, FAD-dependent monooxygenase; part of the gene cluster that mediates the biosynthesis of the dimeric xanthones cryptosporioptides. The pathway begins with the synthesis of atrochrysone thioester by the polyketide synthase dmx-nrPKS. The atrochrysone carboxyl ACP thioesterase dmxR1 then breaks the thioester bond and releases the atrochrysone carboxylic acid from dmx-nrPKS. Atrochrysone carboxylic acid is decarboxylated by the decarboxylase dmxR15, and oxidized by the anthrone oxygenase dmxR16 to yield emodin. Emodin is then reduced to emodin hydroquinone by the oxidoreductase dmxR7. A-ring reduction by the short chain dehydrogenase dmxR18, dehydration by the scytalone dehydratase-like protein dmxR17 and probable spontaneous re-oxidation, results in overall deoxygenation to chrysophanol. Baeyer-Villiger oxidation by the Baeyer-Villiger monooxygenase (BVMO) dmxR6 then yields monodictylactone in equilibrium with monodictyphenone. In the case of the cryptosporioptides biosynthesis, monodictylactone is reduced at C-12 to an alcohol (by the short chain dehydrogenases dmxR12 or dmxR8) and hydroxylated at C-5 by dmxR9, yielding the electron-rich aromatic which could eliminate H(2)O to form the ortho-quinonemethide, followed by tautomerisation to paraquinone and complete the formal reduction to produce the 10-methylgroup. Conjugate addition of C-4a-OH to the resulting paraquinone by the monooxygenase dmxR10 then gives cyclohexadienone, which is then reduced at C-5 by the short chain dehydrogenase dmxR3 to give the dihydroxanthone. The 6,7-epoxide in the cryptosporioptides could be introduced by the cytochrome P450 monooxygenase dmxL3. The highly reducing PKS dmxL2 manufactures butyrate, which is further carboxylated by dmxL1 to form ethylmalonate. It is not yet clear whether the carboxylation occurs while the butyrate is attached to the ACP of dmxL2, but this unusual fungal metabolite could then be esterified to O-5 by the O-acetyltransferase dmxR13. Finally, dimerization performed by dmxR5 gives the observed dimers cryptosporioptides A, B and C as the final products of the pathway. In Cryptosporiopsis sp. (strain 8999), this protein is FAD-dependent monooxygenase dmxR9.